Here is a 419-residue protein sequence, read N- to C-terminus: Serine hydroxymethyltransferase (419 aa).

(6S)-5,6,7,8-tetrahydrofolate contacts are provided by residues Leu-118 and 122–124 (GHL). Position 226 is an N6-(pyridoxal phosphate)lysine (Lys-226). (6S)-5,6,7,8-tetrahydrofolate is bound at residue Glu-242.

It belongs to the SHMT family. In terms of assembly, homodimer. Pyridoxal 5'-phosphate is required as a cofactor.

The protein resides in the cytoplasm. The catalysed reaction is (6R)-5,10-methylene-5,6,7,8-tetrahydrofolate + glycine + H2O = (6S)-5,6,7,8-tetrahydrofolate + L-serine. It participates in one-carbon metabolism; tetrahydrofolate interconversion. It functions in the pathway amino-acid biosynthesis; glycine biosynthesis; glycine from L-serine: step 1/1. Catalyzes the reversible interconversion of serine and glycine with tetrahydrofolate (THF) serving as the one-carbon carrier. This reaction serves as the major source of one-carbon groups required for the biosynthesis of purines, thymidylate, methionine, and other important biomolecules. Also exhibits THF-independent aldolase activity toward beta-hydroxyamino acids, producing glycine and aldehydes, via a retro-aldol mechanism. This Metamycoplasma arthritidis (strain 158L3-1) (Mycoplasma arthritidis) protein is Serine hydroxymethyltransferase.